The chain runs to 516 residues: MLNPKVAYMVWMTCLGLTLPSQAQSNDYRPSYHFTPDQYWMNEPNGLIKIGSTWHLFFQHNPTANVWGNICWGHATSTDLMHWAYKPTAIADENGVEAFTGTAYYDPNNTSGLGDSANPPYLAWFTGYTTSSQTQDQRLAFSVDNGATWTKFQGNPIISTSQEAPHDITGGLESRDPKVFFHRQSGNWIMVLAHGGQDKLSFWTSADTIHWTWQSDLKSTSINGLSSDITGWEVPDMFELPVEGTGETTWVVMMTPAEGSPAGGNGVLAITGSFDGKTFTADPVDASTMWLDNGRDFDGALSWVNVPASDGRRIIAAVMNSYGSNPPTTTWKGMLSFPRTLSLKKVGTQQHFVQQPITELDTISTSMQTLANQTITPGQTLLSSIRGTALDVRVAFYPDAGSVLSLTVRKGASEQTVINYTQSNATLSVDRTESGDISYDPAAGGVHTAKLEEDGTGLVSIRVLVDTCSVEVFGGQGEAVISDLIFPSDSSDGLALEVTGGNAVLQSVDVRSVSLE.

The signal sequence occupies residues 1-25 (MLNPKVAYMVWMTCLGLTLPSQAQS). Residues 40–43 (WMNE), Gln59, Trp67, and 99–100 (FT) each bind substrate. Residue Glu43 is part of the active site. A glycan (N-linked (GlcNAc...) asparagine) is linked at Asn109. Residues 175-176 (RD) and Glu233 contribute to the substrate site. Asn372, Asn419, and Asn424 each carry an N-linked (GlcNAc...) asparagine glycan.

It belongs to the glycosyl hydrolase 32 family.

It localises to the secreted. The catalysed reaction is Endohydrolysis of (2-&gt;1)-beta-D-fructosidic linkages in inulin.. Functionally, endo-inulinase involved in utilization of the plant storage polymer inulin, consisting of fructooligosaccharides with a degree of polymerization (DP) value from 2 to 60. The polypeptide is Extracellular endo-inulinase inuB (inuB) (Aspergillus niger).